The sequence spans 537 residues: MDASMITNSKSITSPPSLALGKSGGGGVIRSSLCNLMMPSKVNFPRQRTQTLKVSQKKLKRATSGGLGVTCSGGDKILVANRGEIAVRVIRTAHEMGIPCVAVYSTIDKDALHVKLADEAVCIGEAPSNQSYLVIPNVLSAAISRGCTMLHPGYGFLSENALFVEMCRDHGINFIGPNPDSIRVMGDKATARETMKNAGVPTVPGSDGLLQSTEEAVRVANEIGFPVMIKATAGGGGRGMRLAKEPGEFVKLLQQAKSEAAAAFGNDGCYLEKFVQNPRHIEFQVLADKFGNVVHFGERDCSIQRRNQKLLEEAPSPALTAELRKAMGDAAVAAAASIGYIGVGTVEFLLDERGSFYFMEMNTRIQVEHPVTEMIYSVDLIEEQIRVAMGEKLRYKQEDIVLRGHSIECRINAEDPFKGFRPGPGRITSYLPSGGPFVRMDSHVYSDYVVPPSYDSLLGKLIVWAPTREKAIERMKRALNDTIITGVPTTINYHKLILDVEDFKNGKVDTAFIVKHEEELAEPQEIVAVKDLTNATV.

The transit peptide at 1 to 71 (MDASMITNSK…ATSGGLGVTC (71 aa)) directs the protein to the chloroplast. ATP contacts are provided by residues Lys188, Lys230, 236–237 (GG), 272–275 (EKFV), and His280. The region spanning 192-389 (RETMKNAGVP…LIEEQIRVAM (198 aa)) is the ATP-grasp domain. A hydrogencarbonate-binding site is contributed by Lys309. The ATP site is built by Glu347 and Glu360. Mg(2+) is bound by residues Glu347, Glu360, and Asn362. Mn(2+)-binding residues include Glu347, Glu360, and Asn362. Arg364, Val367, and Arg410 together coordinate hydrogencarbonate. Arg364 is a catalytic residue. Residue Arg410 participates in biotin binding.

As to quaternary structure, acetyl-CoA carboxylase is a heterohexamer composed of biotin carboxyl carrier protein, biotin carboxylase and two subunits each of ACCase subunit alpha and ACCase plastid-coded subunit beta (accD). Requires Mg(2+) as cofactor. The cofactor is Mn(2+). In terms of tissue distribution, accumulates in fatty acids synthesizing tissues. Mostly expressed in siliques, developing leaves, and flowers, present in roots and embryos (especially at torpedo stage), and, to a lower extent, in mature leaves.

It is found in the plastid. The protein resides in the chloroplast. The catalysed reaction is N(6)-biotinyl-L-lysyl-[protein] + hydrogencarbonate + ATP = N(6)-carboxybiotinyl-L-lysyl-[protein] + ADP + phosphate + H(+). Its pathway is lipid metabolism; malonyl-CoA biosynthesis; malonyl-CoA from acetyl-CoA: step 1/1. Its function is as follows. This protein is a component of the acetyl coenzyme A carboxylase complex; first, biotin carboxylase catalyzes the carboxylation of the carrier protein and then the transcarboxylase transfers the carboxyl group to form malonyl-CoA. The chain is Biotin carboxylase, chloroplastic (CAC2) from Arabidopsis thaliana (Mouse-ear cress).